The sequence spans 91 residues: Small ribosomal subunit protein uS15 (91 aa).

This sequence belongs to the universal ribosomal protein uS15 family. In terms of assembly, part of the 30S ribosomal subunit. Forms a bridge to the 50S subunit in the 70S ribosome, contacting the 23S rRNA.

One of the primary rRNA binding proteins, it binds directly to 16S rRNA where it helps nucleate assembly of the platform of the 30S subunit by binding and bridging several RNA helices of the 16S rRNA. Functionally, forms an intersubunit bridge (bridge B4) with the 23S rRNA of the 50S subunit in the ribosome. In Synechococcus sp. (strain JA-3-3Ab) (Cyanobacteria bacterium Yellowstone A-Prime), this protein is Small ribosomal subunit protein uS15.